The primary structure comprises 151 residues: MHSLQAKILDPRLGSDFPLPQYATPGSAGLDLRAMLKEDTVLGPGQTLLIPTGLSIYIADPGLAALVLPRSGLGHKHGIVLGNLVGLIDSDYQGELMVSCWNRGESPFTIAVGERIAQLVLVPVVQAHFELVEQFDESQRGAGGFGHSGSH.

Residues 70 to 72 (RSG), Asn83, 87 to 89 (LID), and Met97 contribute to the substrate site.

The protein belongs to the dUTPase family. Requires Mg(2+) as cofactor.

The catalysed reaction is dUTP + H2O = dUMP + diphosphate + H(+). The protein operates within pyrimidine metabolism; dUMP biosynthesis; dUMP from dCTP (dUTP route): step 2/2. Its function is as follows. This enzyme is involved in nucleotide metabolism: it produces dUMP, the immediate precursor of thymidine nucleotides and it decreases the intracellular concentration of dUTP so that uracil cannot be incorporated into DNA. The protein is Deoxyuridine 5'-triphosphate nucleotidohydrolase of Pseudomonas aeruginosa (strain UCBPP-PA14).